Consider the following 2769-residue polypeptide: Teneurin-4 (2769 aa).

A compositionally biased stretch (basic and acidic residues) spans 1 to 22 (MDVKERKPYRSLTRRRDAERRY). The interval 1–45 (MDVKERKPYRSLTRRRDAERRYTSSSADSEEGKAPQKSYSSSETL) is disordered. The 341-residue stretch at 1 to 341 (MDVKERKPYR…KPSKYCNWKC (341 aa)) folds into the Teneurin N-terminal domain. Residues 1–345 (MDVKERKPYR…YCNWKCAALS (345 aa)) lie on the Cytoplasmic side of the membrane. A Phosphoserine modification is found at Ser-124. Residues 130-233 (RLWGRSTRSG…PPAGGAQEPA (104 aa)) form a disordered region. Positions 134–155 (RSTRSGRSSCLSSRANSNLTLT) are enriched in low complexity. Over residues 156-166 (DTEHENTETDH) the composition is skewed to basic and acidic residues. A Phosphothreonine modification is found at Thr-178. Residues 187–211 (HTPNQHHAASINSLNRGNFTPRSNP) are compositionally biased toward polar residues. The helical transmembrane segment at 346-366 (AIVISATLVILLAYFVAMHLF) threads the bilayer. The Extracellular segment spans residues 367-2769 (GLNWHLQPME…FMRQSEMGRR (2403 aa)). Residues 400–426 (PSGGTGLETPDRKGKGTTEGKPSSFFP) form a disordered region. Over residues 408 to 417 (TPDRKGKGTT) the composition is skewed to basic and acidic residues. Asn-467 is a glycosylation site (N-linked (GlcNAc...) asparagine). A disordered region spans residues 507-526 (ARSLEGTPRQSRGTVPPSSH). A compositionally biased stretch (polar residues) spans 514 to 526 (PRQSRGTVPPSSH). EGF-like domains are found at residues 562 to 593 (SVDNCPSNCYGNGDCISGTCHCFLGFLGPDCG), 594 to 624 (RASCPVLCSGNGQYMKGRCLCHSGWKGAECD), 626 to 658 (PTNQCIDVACSNHGTCITGTCICNPGYKGESCE), 659 to 690 (EVDCMDPTCSGRGVCVRGECHCSVGWGGTNCE), 692 to 725 (PRATCLDQCSGHGTFLPDTGLCSCDPSWTGHDCS), 726 to 757 (IEICAADCGGHGVCVGGTCRCEDGWMGAACDQ), 758 to 787 (RACHPRCAEHGTCRDGKCECSPGWNGEHCT), and 788 to 831 (IAHY…AGCD). 22 cysteine pairs are disulfide-bonded: Cys-566–Cys-576, Cys-570–Cys-581, Cys-583–Cys-592, Cys-601–Cys-612, Cys-614–Cys-623, Cys-630–Cys-641, Cys-635–Cys-646, Cys-648–Cys-657, Cys-662–Cys-673, Cys-667–Cys-678, Cys-680–Cys-689, Cys-700–Cys-713, Cys-715–Cys-724, Cys-729–Cys-739, Cys-733–Cys-744, Cys-746–Cys-755, Cys-760–Cys-770, Cys-764–Cys-775, Cys-777–Cys-786, Cys-800–Cys-810, Cys-804–Cys-819, and Cys-821–Cys-830. N-linked (GlcNAc...) asparagine glycosylation is found at Asn-940 and Asn-1259. NHL repeat units follow at residues 1216–1259 (SCPS…PSGN), 1264–1308 (LELR…IKST), 1334–1378 (TRCG…NGII), 1393–1444 (LSCD…VAGR), and 1523–1566 (CFSG…IRKN). Residues 1576–1595 (YELSSPIDQELYLFDTTGKH) form a YD 1 repeat. N-linked (GlcNAc...) asparagine glycosylation occurs at Asn-1609. 3 YD repeats span residues 1612 to 1632 (YTGDGDITLITDNNGNMVNVR), 1675 to 1694 (YHGNSGLLATKSNENGWTTF), and 1695 to 1717 (YEYDSFGRLTNVTFPTGQVSSFR). N-linked (GlcNAc...) asparagine glycans are attached at residues Asn-1705, Asn-1741, Asn-1799, and Asn-1884. YD repeat units lie at residues 1887-1906 (YSPGGYIAGIQRGIMSERME), 1928-1946 (YLEKSMVLLLHSQRQYIFE), 1947-1967 (FDKNDRLSSVTMPNVARQTLE), 1974-1991 (YYRNIYQPPEGNASVIQD), 1992-2013 (FTEDGHLLHTFYLGTGRRVIYK), 2014-2031 (YGKLSKLAETLYDTTKVS), 2034-2054 (YDETAGMLKTINLQNEGFTCT), 2057-2077 (YRQIGPLIDRQIFRFTEEGMV), 2085-2104 (YDNSFRVTSMQAVINETPLP), 2110-2127 (YDDVSGKTEQFGKFGVIY), 2128-2154 (YDINQIITTAVMTHTKHFDAYGRMKEV), 2156-2169 (YEIFRSLMYWMTVQ), 2170-2193 (YDNMGRVVKKELKVGPYANTTRYS), 2196-2216 (YDADGQLQTVSINDKPLWRYS), 2217-2237 (YDLNGNLHLLSPGNSARLTPL), 2239-2259 (YDIRDRITRLGDVQYKMDEDG), 2271-2291 (YNSAGLLIKAYNRAGSWSVRY), and 2293-2313 (YDGLGRRVSSKSSHSHHLQFF). A glycan (N-linked (GlcNAc...) asparagine) is linked at Asn-1985. N-linked (GlcNAc...) asparagine glycosylation occurs at Asn-2188. Asn-2328 carries N-linked (GlcNAc...) asparagine glycosylation. A YD 23 repeat occupies 2339-2380 (YDLQGHLFAMELSSGDEFYIACDNIGTPLAVFSGTGLMIKQI). N-linked (GlcNAc...) asparagine glycosylation occurs at Asn-2646.

The protein belongs to the tenascin family. Teneurin subfamily. As to quaternary structure, homodimer; disulfide-linked. May also form heterodimer with either TENM1 or TENM2 or TENM3.

Its subcellular location is the cell membrane. The protein localises to the cell projection. It localises to the nucleus. It is found in the cytoplasm. In terms of biological role, involved in neural development, regulating the establishment of proper connectivity within the nervous system. Plays a role in the establishment of the anterior-posterior axis during gastrulation. Regulates the differentiation and cellular process formation of oligodendrocytes and myelination of small-diameter axons in the central nervous system (CNS). Promotes activation of focal adhesion kinase. May function as a cellular signal transducer. This chain is Teneurin-4 (TENM4), found in Homo sapiens (Human).